The sequence spans 266 residues: 5'-nucleotidase SurE (266 aa).

4 residues coordinate a divalent metal cation: Asp8, Asp9, Ser39, and Asn95.

This sequence belongs to the SurE nucleotidase family. It depends on a divalent metal cation as a cofactor.

It is found in the cytoplasm. The catalysed reaction is a ribonucleoside 5'-phosphate + H2O = a ribonucleoside + phosphate. Nucleotidase that shows phosphatase activity on nucleoside 5'-monophosphates. This Syntrophus aciditrophicus (strain SB) protein is 5'-nucleotidase SurE.